Consider the following 544-residue polypeptide: Chaperonin GroEL (544 aa).

ATP-binding positions include 30–33 (TLGP), Lys-51, 87–91 (DGTTT), Gly-415, 481–483 (DAL), and Asp-497.

The protein belongs to the chaperonin (HSP60) family. In terms of assembly, forms a cylinder of 14 subunits composed of two heptameric rings stacked back-to-back. Interacts with the co-chaperonin GroES.

The protein localises to the cytoplasm. It carries out the reaction ATP + H2O + a folded polypeptide = ADP + phosphate + an unfolded polypeptide.. Its function is as follows. Together with its co-chaperonin GroES, plays an essential role in assisting protein folding. The GroEL-GroES system forms a nano-cage that allows encapsulation of the non-native substrate proteins and provides a physical environment optimized to promote and accelerate protein folding. The sequence is that of Chaperonin GroEL from Chlamydia trachomatis serovar L2 (strain ATCC VR-902B / DSM 19102 / 434/Bu).